A 209-amino-acid polypeptide reads, in one-letter code: ATP-dependent Clp protease proteolytic subunit (209 aa).

Ser107 functions as the Nucleophile in the catalytic mechanism. His132 is an active-site residue.

The protein belongs to the peptidase S14 family. In terms of assembly, fourteen ClpP subunits assemble into 2 heptameric rings which stack back to back to give a disk-like structure with a central cavity, resembling the structure of eukaryotic proteasomes.

The protein resides in the cytoplasm. The catalysed reaction is Hydrolysis of proteins to small peptides in the presence of ATP and magnesium. alpha-casein is the usual test substrate. In the absence of ATP, only oligopeptides shorter than five residues are hydrolyzed (such as succinyl-Leu-Tyr-|-NHMec, and Leu-Tyr-Leu-|-Tyr-Trp, in which cleavage of the -Tyr-|-Leu- and -Tyr-|-Trp bonds also occurs).. Its function is as follows. Cleaves peptides in various proteins in a process that requires ATP hydrolysis. Has a chymotrypsin-like activity. Plays a major role in the degradation of misfolded proteins. This Ruegeria pomeroyi (strain ATCC 700808 / DSM 15171 / DSS-3) (Silicibacter pomeroyi) protein is ATP-dependent Clp protease proteolytic subunit.